The sequence spans 617 residues: Sodium-coupled monocarboxylate transporter 2 (617 aa).

Residues 1–5 are Extracellular-facing; the sequence is MEVKN. Residues 6 to 26 form a helical membrane-spanning segment; the sequence is FAVWDYVVFAALFIISSGIGV. Residues 27–47 are Cytoplasmic-facing; it reads FYAIKERKKATSREFLVGGRQ. Residues 48 to 68 form a helical membrane-spanning segment; it reads MSFGPVALSLTASFMSAVTVL. Topologically, residues 69 to 80 are extracellular; it reads GTPADVYRFGAS. A helical transmembrane segment spans residues 81–101; sequence FVLFFITYGLVIILTSELFLP. Over 102–128 the chain is Cytoplasmic; it reads VFYRSGITSTYEYLQLRFNKPVRYAAT. Residues 129–149 form a helical membrane-spanning segment; it reads VIYIVQTILYTGVVVYAPALA. The Extracellular portion of the chain corresponds to 150–157; that stretch reads LNQVTGFD. A helical membrane pass occupies residues 158–178; it reads LWGSVFATGIVCTFYCTLGGL. The Cytoplasmic portion of the chain corresponds to 179–180; sequence KA. Residues 181–201 traverse the membrane as a helical segment; that stretch reads VVWTDAFQMVVMIVGFLTVLI. The Extracellular portion of the chain corresponds to 202–235; it reads QGSTYAGGLHNVLEQAENGSRLNIFDFDIDPLRR. Residue Asn219 is glycosylated (N-linked (GlcNAc...) asparagine). The helical transmembrane segment at 236–256 threads the bilayer; it reads HTFWTISVGGTFTWLGIYGVN. Residues 257-273 lie on the Cytoplasmic side of the membrane; that stretch reads QSTIQRCISCKTEKHAK. Residues 274 to 294 traverse the membrane as a helical segment; the sequence is LALYFNLLGLWIILLCAVFSG. The Extracellular segment spans residues 295–334; the sequence is LTMYAHFKDCDPWTSGIISAPDQLMPYFVMELFSTMPGLP. The chain crosses the membrane as a helical span at residues 335-357; the sequence is GLFVACAFSGTLSTVAASINALA. Residues 358–385 are Cytoplasmic-facing; sequence TVTFEDFVKSCFPRLSDKLSTWISKGLC. A helical transmembrane segment spans residues 386–406; sequence LLFGVICTSTAVAASLMGGVI. Residues 407-411 are Extracellular-facing; the sequence is QAALS. Residues 412-432 traverse the membrane as a helical segment; it reads IHGMCGGPMLGLFSLGILFPF. Residues 433–437 are Cytoplasmic-facing; that stretch reads VNWKG. A helical membrane pass occupies residues 438–458; it reads ALAGLLTGILLSFWVAIGAFI. Residues 459 to 507 lie on the Extracellular side of the membrane; that stretch reads YPAPASKTWPLPLSTDQCGLSNVTESVPPVLSSRPAIAETWYALSYLHY. The N-linked (GlcNAc...) asparagine glycan is linked to Asn480. The helical transmembrane segment at 508–528 threads the bilayer; it reads STVGCLGCIAAGVIISFLTGL. Over 529–617 the chain is Cytoplasmic; that stretch reads QKGKDIPPLL…NMALEKITHF (89 aa).

This sequence belongs to the sodium:solute symporter (SSF) (TC 2.A.21) family.

The protein localises to the apical cell membrane. The enzyme catalyses (S)-lactate(out) + Na(+)(out) = (S)-lactate(in) + Na(+)(in). It carries out the reaction nicotinate(out) + Na(+)(out) = nicotinate(in) + Na(+)(in). The catalysed reaction is pyruvate(out) + Na(+)(out) = pyruvate(in) + Na(+)(in). It catalyses the reaction propanoate(out) + Na(+)(out) = propanoate(in) + Na(+)(in). The enzyme catalyses butanoate(out) + Na(+)(out) = butanoate(in) + Na(+)(in). It carries out the reaction acetoacetate(out) + Na(+)(out) = acetoacetate(in) + Na(+)(in). Acts as an electroneutral and low-affinity sodium (Na(+))-dependent sodium-coupled solute transporter. Catalyzes the transport across the plasma membrane of many monocarboxylates such as lactate, pyruvate, nicotinate, propionate, butyrate and beta-D-hydroxybutyrate. May be responsible for the first step of reabsorption of monocarboxylates from the lumen of the proximal tubule of the kidney and the small intestine. May play also a role in monocarboxylates transport in the retina. Mediates electroneutral uptake of lactate, with a stoichiometry of 2 Na(+) for each lactate. The sequence is that of Sodium-coupled monocarboxylate transporter 2 (SLC5A12) from Bos taurus (Bovine).